Here is a 471-residue protein sequence, read N- to C-terminus: Eukaryotic translation initiation factor 3 subunit L (471 aa).

Residues 252-446 form the PCI domain; that stretch reads DAIRMFSHIL…DLDYAMQGDL (195 aa).

This sequence belongs to the eIF-3 subunit L family.

Its subcellular location is the cytoplasm. Component of the eukaryotic translation initiation factor 3 (eIF-3) complex, which is involved in protein synthesis of a specialized repertoire of mRNAs and, together with other initiation factors, stimulates binding of mRNA and methionyl-tRNAi to the 40S ribosome. The eIF-3 complex specifically targets and initiates translation of a subset of mRNAs involved in cell proliferation. This is Eukaryotic translation initiation factor 3 subunit L from Pyricularia oryzae (strain Y34) (Rice blast fungus).